The chain runs to 537 residues: Chaperonin GroEL 2 (537 aa).

ATP-binding positions include 29-32 (TLGP), 86-90 (DGTTT), Gly-412, and Asp-495.

The protein belongs to the chaperonin (HSP60) family. As to quaternary structure, forms a cylinder of 14 subunits composed of two heptameric rings stacked back-to-back. Interacts with the co-chaperonin GroES.

It is found in the cytoplasm. It catalyses the reaction ATP + H2O + a folded polypeptide = ADP + phosphate + an unfolded polypeptide.. Together with its co-chaperonin GroES, plays an essential role in assisting protein folding. The GroEL-GroES system forms a nano-cage that allows encapsulation of the non-native substrate proteins and provides a physical environment optimized to promote and accelerate protein folding. In Paenarthrobacter aurescens (strain TC1), this protein is Chaperonin GroEL 2.